Reading from the N-terminus, the 323-residue chain is GDP-L-fucose synthase 1 (323 aa).

An N-acetylalanine modification is found at alanine 2. 23–29 (GHRGLVG) lines the NADP(+) pocket. The active-site Proton donor/acceptor is the tyrosine 149. NADP(+)-binding positions include lysine 153, 176-179 (PTNL), and histidine 192. Positions 200, 215, 222, and 282 each coordinate substrate.

The protein belongs to the NAD(P)-dependent epimerase/dehydratase family. Fucose synthase subfamily. As to quaternary structure, binds and stabilizes MUR1. Homodimer. In terms of tissue distribution, highly expressed in roots and flowers, less abundant in leaves, stems and siliques.

It catalyses the reaction GDP-beta-L-fucose + NADP(+) = GDP-4-dehydro-alpha-D-rhamnose + NADPH + H(+). Its pathway is nucleotide-sugar biosynthesis; GDP-L-fucose biosynthesis via de novo pathway; GDP-L-fucose from GDP-alpha-D-mannose: step 2/2. Functionally, catalyzes the two-step NADP-dependent conversion of GDP-4-dehydro-6-deoxy-D-mannose to GDP-fucose, involving an epimerase and a reductase reaction. Not involved in the synthesis of GDP-L-galactose from GDP-D-mannose. The sequence is that of GDP-L-fucose synthase 1 (GER1) from Arabidopsis thaliana (Mouse-ear cress).